We begin with the raw amino-acid sequence, 490 residues long: Cardiolipin synthase 1 (490 aa).

Helical transmembrane passes span 9–29 (ILTI…FVII) and 42–62 (WAWL…YLFL). 2 consecutive PLD phosphodiesterase domains span residues 225–252 (MNNR…GDDY) and 403–430 (QNGF…DFRS). Catalysis depends on residues His-230, Lys-232, Asp-237, His-408, Lys-410, and Asp-415.

Belongs to the phospholipase D family. Cardiolipin synthase subfamily.

The protein localises to the cell membrane. It carries out the reaction 2 a 1,2-diacyl-sn-glycero-3-phospho-(1'-sn-glycerol) = a cardiolipin + glycerol. Functionally, catalyzes the reversible phosphatidyl group transfer from one phosphatidylglycerol molecule to another to form cardiolipin (CL) (diphosphatidylglycerol) and glycerol. The sequence is that of Cardiolipin synthase 1 (cls1) from Staphylococcus epidermidis (strain ATCC 35984 / DSM 28319 / BCRC 17069 / CCUG 31568 / BM 3577 / RP62A).